A 111-amino-acid chain; its full sequence is Putative FAD-linked sulfhydryl oxidase 347L (111 aa).

One can recognise an ERV/ALR sulfhydryl oxidase domain in the interval 2–109 (TDIDPHIWGP…LPESVARKKW (108 aa)). A disulfide bridge connects residues Cys-49 and Cys-52.

The protein belongs to the IIV-6 347L family. The cofactor is FAD.

The enzyme catalyses 2 R'C(R)SH + O2 = R'C(R)S-S(R)CR' + H2O2. Its function is as follows. FAD-dependent sulfhydryl oxidase that catalyzes disulfide bond formation. This Invertebrate iridescent virus 6 (IIV-6) protein is Putative FAD-linked sulfhydryl oxidase 347L.